The following is a 38-amino-acid chain: Anthranilate phosphoribosyltransferase (38 aa).

It belongs to the anthranilate phosphoribosyltransferase family. Homodimer.

The catalysed reaction is N-(5-phospho-beta-D-ribosyl)anthranilate + diphosphate = 5-phospho-alpha-D-ribose 1-diphosphate + anthranilate. It participates in amino-acid biosynthesis; L-tryptophan biosynthesis; L-tryptophan from chorismate: step 2/5. Functionally, catalyzes the transfer of the phosphoribosyl group of 5-phosphorylribose-1-pyrophosphate (PRPP) to anthranilate to yield N-(5'-phosphoribosyl)-anthranilate (PRA). The chain is Anthranilate phosphoribosyltransferase (trpD) from Serratia marcescens.